The sequence spans 129 residues: Small ribosomal subunit protein uS9 (129 aa).

The tract at residues 107-129 (SRTVERKKYGRRKARRSPQFSKR) is disordered. Over residues 114–129 (KYGRRKARRSPQFSKR) the composition is skewed to basic residues.

It belongs to the universal ribosomal protein uS9 family.

The polypeptide is Small ribosomal subunit protein uS9 (Campylobacter jejuni subsp. jejuni serotype O:23/36 (strain 81-176)).